The sequence spans 348 residues: Protein RecA (348 aa).

67–74 (GPESSGKT) contributes to the ATP binding site.

It belongs to the RecA family.

Its subcellular location is the cytoplasm. Functionally, can catalyze the hydrolysis of ATP in the presence of single-stranded DNA, the ATP-dependent uptake of single-stranded DNA by duplex DNA, and the ATP-dependent hybridization of homologous single-stranded DNAs. It interacts with LexA causing its activation and leading to its autocatalytic cleavage. The chain is Protein RecA from Clostridioides difficile (strain 630) (Peptoclostridium difficile).